The primary structure comprises 303 residues: Signal recognition particle receptor FtsY (303 aa).

GTP is bound by residues 108–115 (GVNGAGKT), 190–194 (DTAGR), and 254–257 (TKLD).

The protein belongs to the GTP-binding SRP family. FtsY subfamily. Part of the signal recognition particle protein translocation system, which is composed of SRP and FtsY. SRP is a ribonucleoprotein composed of Ffh and a 4.5S RNA molecule.

It localises to the cell inner membrane. The protein resides in the cytoplasm. It catalyses the reaction GTP + H2O = GDP + phosphate + H(+). In terms of biological role, involved in targeting and insertion of nascent membrane proteins into the cytoplasmic membrane. Acts as a receptor for the complex formed by the signal recognition particle (SRP) and the ribosome-nascent chain (RNC). Interaction with SRP-RNC leads to the transfer of the RNC complex to the Sec translocase for insertion into the membrane, the hydrolysis of GTP by both Ffh and FtsY, and the dissociation of the SRP-FtsY complex into the individual components. This is Signal recognition particle receptor FtsY from Rickettsia bellii (strain RML369-C).